Consider the following 72-residue polypeptide: Cell division protein ZapB (72 aa).

The stretch at 2 to 72 forms a coiled coil; sequence SLEILDQLEG…RSLLGQIDNV (71 aa). Residues 34 to 57 are disordered; that stretch reads NQQAQQANDELRSENEQLKGEHNN. A compositionally biased stretch (basic and acidic residues) spans 42–57; the sequence is DELRSENEQLKGEHNN.

Belongs to the ZapB family. Homodimer. The ends of the coiled-coil dimer bind to each other, forming polymers. Interacts with FtsZ.

It localises to the cytoplasm. Its function is as follows. Non-essential, abundant cell division factor that is required for proper Z-ring formation. It is recruited early to the divisome by direct interaction with FtsZ, stimulating Z-ring assembly and thereby promoting cell division earlier in the cell cycle. Its recruitment to the Z-ring requires functional FtsA or ZipA. The sequence is that of Cell division protein ZapB from Mannheimia succiniciproducens (strain KCTC 0769BP / MBEL55E).